The sequence spans 320 residues: o-succinylbenzoate synthase (320 aa).

The active-site Proton donor is Lys133. Residues Asp161, Glu190, and Asp213 each coordinate Mg(2+). Lys235 functions as the Proton acceptor in the catalytic mechanism.

The protein belongs to the mandelate racemase/muconate lactonizing enzyme family. MenC type 1 subfamily. Requires a divalent metal cation as cofactor.

It catalyses the reaction (1R,6R)-6-hydroxy-2-succinyl-cyclohexa-2,4-diene-1-carboxylate = 2-succinylbenzoate + H2O. It participates in quinol/quinone metabolism; 1,4-dihydroxy-2-naphthoate biosynthesis; 1,4-dihydroxy-2-naphthoate from chorismate: step 4/7. Its pathway is quinol/quinone metabolism; menaquinone biosynthesis. In terms of biological role, converts 2-succinyl-6-hydroxy-2,4-cyclohexadiene-1-carboxylate (SHCHC) to 2-succinylbenzoate (OSB). The protein is o-succinylbenzoate synthase of Salmonella choleraesuis (strain SC-B67).